The sequence spans 84 residues: Small ribosomal subunit protein bS16 (84 aa).

Belongs to the bacterial ribosomal protein bS16 family.

The chain is Small ribosomal subunit protein bS16 from Acaryochloris marina (strain MBIC 11017).